We begin with the raw amino-acid sequence, 226 residues long: Probable septum site-determining protein MinC (226 aa).

It belongs to the MinC family. In terms of assembly, interacts with MinD and FtsZ.

In terms of biological role, cell division inhibitor that blocks the formation of polar Z ring septums. Rapidly oscillates between the poles of the cell to destabilize FtsZ filaments that have formed before they mature into polar Z rings. Prevents FtsZ polymerization. This chain is Probable septum site-determining protein MinC, found in Bacillus velezensis (strain DSM 23117 / BGSC 10A6 / LMG 26770 / FZB42) (Bacillus amyloliquefaciens subsp. plantarum).